Reading from the N-terminus, the 314-residue chain is Ribonuclease Z (314 aa).

7 residues coordinate Zn(2+): His62, His64, Asp66, His67, His139, Asp210, and His268. The Proton acceptor role is filled by Asp66.

Belongs to the RNase Z family. In terms of assembly, homodimer. Zn(2+) serves as cofactor.

It catalyses the reaction Endonucleolytic cleavage of RNA, removing extra 3' nucleotides from tRNA precursor, generating 3' termini of tRNAs. A 3'-hydroxy group is left at the tRNA terminus and a 5'-phosphoryl group is left at the trailer molecule.. Its function is as follows. Zinc phosphodiesterase, which displays some tRNA 3'-processing endonuclease activity. Probably involved in tRNA maturation, by removing a 3'-trailer from precursor tRNA. The protein is Ribonuclease Z of Rippkaea orientalis (strain PCC 8801 / RF-1) (Cyanothece sp. (strain PCC 8801)).